A 947-amino-acid polypeptide reads, in one-letter code: Protein translocase subunit SecA 1 (947 aa).

ATP is bound by residues Gln83, 101 to 105, and Asp490; that span reads GEGKT. The interval 860 to 947 is disordered; the sequence is AKAQEQTGQG…KTSKPTRRRG (88 aa). Residues 925 to 934 show a composition bias toward basic and acidic residues; it reads TRRERREAAR. A compositionally biased stretch (basic residues) spans 935–947; sequence KQAKTSKPTRRRG.

This sequence belongs to the SecA family. In terms of assembly, monomer and homodimer. Part of the essential Sec protein translocation apparatus which comprises SecA, SecYEG and auxiliary proteins SecDF. Other proteins may also be involved.

The protein resides in the cell membrane. It is found in the cytoplasm. It catalyses the reaction ATP + H2O + cellular proteinSide 1 = ADP + phosphate + cellular proteinSide 2.. Its function is as follows. Part of the Sec protein translocase complex. Interacts with the SecYEG preprotein conducting channel. Has a central role in coupling the hydrolysis of ATP to the transfer of proteins into and across the cell membrane, serving as an ATP-driven molecular motor driving the stepwise translocation of polypeptide chains across the membrane. The chain is Protein translocase subunit SecA 1 from Mycobacterium sp. (strain KMS).